The chain runs to 329 residues: NAD kinase (329 aa).

The segment at 1–26 (MTTPGTDHNADQGADSGDKATKAASG) is disordered. The active-site Proton acceptor is the Asp104. Residues 104–105 (DG), Arg109, 179–180 (NE), Asp209, and 220–225 (TAYAFS) contribute to the NAD(+) site.

It belongs to the NAD kinase family. Requires a divalent metal cation as cofactor.

Its subcellular location is the cytoplasm. The enzyme catalyses NAD(+) + ATP = ADP + NADP(+) + H(+). Functionally, involved in the regulation of the intracellular balance of NAD and NADP, and is a key enzyme in the biosynthesis of NADP. Catalyzes specifically the phosphorylation on 2'-hydroxyl of the adenosine moiety of NAD to yield NADP. The protein is NAD kinase of Corynebacterium jeikeium (strain K411).